The primary structure comprises 177 residues: Bifunctional protein PyrR (177 aa).

Positions 99–111 match the PRPP-binding motif; that stretch reads VVLVDDVLFTGRT.

This sequence belongs to the purine/pyrimidine phosphoribosyltransferase family. PyrR subfamily.

The catalysed reaction is UMP + diphosphate = 5-phospho-alpha-D-ribose 1-diphosphate + uracil. In terms of biological role, regulates the transcription of the pyrimidine nucleotide (pyr) operon in response to exogenous pyrimidines. Also displays a weak uracil phosphoribosyltransferase activity which is not physiologically significant. The protein is Bifunctional protein PyrR of Citrifermentans bemidjiense (strain ATCC BAA-1014 / DSM 16622 / JCM 12645 / Bem) (Geobacter bemidjiensis).